Here is a 443-residue protein sequence, read N- to C-terminus: Serine/threonine-protein phosphatase 2A 55 kDa regulatory subunit B beta isoform (443 aa).

4 WD repeats span residues 22–61, 87–128, 171–209, and 220–260; these read TEAD…KNQV, EIEE…KRPE, AHTY…QSFN, and ELTE…LCDR. At S275 the chain carries Phosphoserine. WD repeat units lie at residues 279–317, 334–375, and 410–442; these read EIIS…RPVE, ENDC…DVTL, and DFSK…QDKV. Y295 bears the Phosphotyrosine mark. At T298 the chain carries Phosphothreonine.

The protein belongs to the phosphatase 2A regulatory subunit B family. As to quaternary structure, PP2A consists of a common heterodimeric core enzyme, composed of a 36 kDa catalytic subunit (subunit C) and a 65 kDa constant regulatory subunit (PR65 or subunit A), that associates with a variety of regulatory subunits. Proteins that associate with the core dimer include three families of regulatory subunits B (the R2/B/PR55/B55, R3/B''/PR72/PR130/PR59 and R5/B'/B56 families), the 48 kDa variable regulatory subunit, viral proteins, and cell signaling molecules. Interacts with IER5 (via N- and C-terminal regions). Interacts with TOMM22. As to expression, expressed in the brain. Isoform 1 and isoform 2 are expressed in the forbrain. Isoform 1 is more strongly expressed than isoform 2 in the olfactory bulb. Isoform 1 and isoform 2 are weakly expressed in the cerebellum. Isoform 1 is expressed in the testis. Isoform 2 expression is undetectable at birth rising to adult level at day 14.

It is found in the cytoplasm. The protein resides in the cytoskeleton. Its subcellular location is the membrane. It localises to the mitochondrion. The protein localises to the mitochondrion outer membrane. Functionally, the B regulatory subunit might modulate substrate selectivity and catalytic activity, and might also direct the localization of the catalytic enzyme to a particular subcellular compartment. Within the PP2A holoenzyme complex, isoform 2 is required to promote proapoptotic activity. Isoform 2 regulates neuronal survival through the mitochondrial fission and fusion balance. The polypeptide is Serine/threonine-protein phosphatase 2A 55 kDa regulatory subunit B beta isoform (Ppp2r2b) (Rattus norvegicus (Rat)).